A 37-amino-acid chain; its full sequence is Large ribosomal subunit protein bL36 (37 aa).

The protein belongs to the bacterial ribosomal protein bL36 family.

This Bacillus pumilus (strain SAFR-032) protein is Large ribosomal subunit protein bL36.